The primary structure comprises 349 residues: UDP-3-O-acylglucosamine N-acyltransferase (349 aa).

Residue histidine 246 is the Proton acceptor of the active site.

This sequence belongs to the transferase hexapeptide repeat family. LpxD subfamily. As to quaternary structure, homotrimer.

It carries out the reaction a UDP-3-O-[(3R)-3-hydroxyacyl]-alpha-D-glucosamine + a (3R)-hydroxyacyl-[ACP] = a UDP-2-N,3-O-bis[(3R)-3-hydroxyacyl]-alpha-D-glucosamine + holo-[ACP] + H(+). The protein operates within bacterial outer membrane biogenesis; LPS lipid A biosynthesis. Catalyzes the N-acylation of UDP-3-O-acylglucosamine using 3-hydroxyacyl-ACP as the acyl donor. Is involved in the biosynthesis of lipid A, a phosphorylated glycolipid that anchors the lipopolysaccharide to the outer membrane of the cell. The chain is UDP-3-O-acylglucosamine N-acyltransferase from Trichormus variabilis (strain ATCC 29413 / PCC 7937) (Anabaena variabilis).